A 182-amino-acid chain; its full sequence is Inner membrane-spanning protein YciB (182 aa).

The next 5 helical transmembrane spans lie at Gly20–Tyr42, Leu55–Leu75, Leu76–Phe96, Leu123–Phe143, and Phe153–Met173.

It belongs to the YciB family.

It is found in the cell inner membrane. Functionally, plays a role in cell envelope biogenesis, maintenance of cell envelope integrity and membrane homeostasis. In Polynucleobacter asymbioticus (strain DSM 18221 / CIP 109841 / QLW-P1DMWA-1) (Polynucleobacter necessarius subsp. asymbioticus), this protein is Inner membrane-spanning protein YciB.